Reading from the N-terminus, the 425-residue chain is Dihydroorotase (425 aa).

The Zn(2+) site is built by histidine 61 and histidine 63. Residues 63-65 (HLR) and asparagine 95 each bind substrate. Aspartate 153, histidine 180, and histidine 233 together coordinate Zn(2+). Asparagine 279 is a substrate binding site. Aspartate 306 serves as a coordination point for Zn(2+). Residue aspartate 306 is part of the active site. Histidine 310 is a substrate binding site.

It belongs to the metallo-dependent hydrolases superfamily. DHOase family. Class I DHOase subfamily. Zn(2+) is required as a cofactor.

The enzyme catalyses (S)-dihydroorotate + H2O = N-carbamoyl-L-aspartate + H(+). Its pathway is pyrimidine metabolism; UMP biosynthesis via de novo pathway; (S)-dihydroorotate from bicarbonate: step 3/3. Functionally, catalyzes the reversible cyclization of carbamoyl aspartate to dihydroorotate. In Geobacter sp. (strain M21), this protein is Dihydroorotase.